Reading from the N-terminus, the 286-residue chain is Bifunctional protein FolD (286 aa).

NADP(+) is bound by residues 165–167 (GRS), serine 190, and valine 231.

This sequence belongs to the tetrahydrofolate dehydrogenase/cyclohydrolase family. As to quaternary structure, homodimer.

It carries out the reaction (6R)-5,10-methylene-5,6,7,8-tetrahydrofolate + NADP(+) = (6R)-5,10-methenyltetrahydrofolate + NADPH. It catalyses the reaction (6R)-5,10-methenyltetrahydrofolate + H2O = (6R)-10-formyltetrahydrofolate + H(+). Its pathway is one-carbon metabolism; tetrahydrofolate interconversion. Its function is as follows. Catalyzes the oxidation of 5,10-methylenetetrahydrofolate to 5,10-methenyltetrahydrofolate and then the hydrolysis of 5,10-methenyltetrahydrofolate to 10-formyltetrahydrofolate. The protein is Bifunctional protein FolD of Bacillus cereus (strain ATCC 10987 / NRS 248).